Consider the following 661-residue polypeptide: Zinc finger protein 81 (661 aa).

The KRAB domain maps to 21-92; the sequence is VSFEDVTVDF…EGEAPHQSCS (72 aa). K266 participates in a covalent cross-link: Glycyl lysine isopeptide (Lys-Gly) (interchain with G-Cter in SUMO2). 12 consecutive C2H2-type zinc fingers follow at residues 330–352, 358–380, 386–408, 414–436, 442–464, 470–492, 498–520, 526–548, 554–576, 582–604, 610–632, and 638–660; these read YICT…EKTH, YKCN…QTTH, FECS…QKIH, HKCS…QRIH, YICT…QRIH, YECS…KRIH, YICT…QKSH, YICA…QTIH, YVCA…QRIH, YKCP…QRIH, and YKCS…RNIH.

This sequence belongs to the krueppel C2H2-type zinc-finger protein family.

It localises to the nucleus. Its function is as follows. May be involved in transcriptional regulation. This Homo sapiens (Human) protein is Zinc finger protein 81 (ZNF81).